The primary structure comprises 30 residues: Pyrrole-2-carboxylate oxygenase (30 aa).

In terms of assembly, homotrimer. The cofactor is FAD.

It catalyses the reaction pyrrole-2-carboxylate + NADH + O2 + H(+) = 5-hydroxypyrrole-2-carboxylate + NAD(+) + H2O. Functionally, monooxygenase that initiates the degradation of pyrrole-2-carboxylate, which allows Arthrobacter sp. strain Py1 to grow on pyrrole-2-carboxylate as sole carbon, nitrogen, and energy source. To a lesser extent, can also use pyrrole, pyrrole-2-aldehyde, and indole-2-carboxylate as substrate. This Arthrobacter sp. (strain Py1) protein is Pyrrole-2-carboxylate oxygenase.